A 252-amino-acid polypeptide reads, in one-letter code: 3-dehydroquinate dehydratase (252 aa).

3-dehydroquinate-binding positions include 47 to 49 (EWR) and arginine 83. Histidine 144 functions as the Proton donor/acceptor in the catalytic mechanism. The Schiff-base intermediate with substrate role is filled by lysine 171. 3-dehydroquinate contacts are provided by arginine 213, serine 232, and glutamine 236.

This sequence belongs to the type-I 3-dehydroquinase family. In terms of assembly, homodimer.

It catalyses the reaction 3-dehydroquinate = 3-dehydroshikimate + H2O. Its pathway is metabolic intermediate biosynthesis; chorismate biosynthesis; chorismate from D-erythrose 4-phosphate and phosphoenolpyruvate: step 3/7. Functionally, involved in the third step of the chorismate pathway, which leads to the biosynthesis of aromatic amino acids. Catalyzes the cis-dehydration of 3-dehydroquinate (DHQ) and introduces the first double bond of the aromatic ring to yield 3-dehydroshikimate. The protein is 3-dehydroquinate dehydratase of Lactiplantibacillus plantarum (strain ATCC BAA-793 / NCIMB 8826 / WCFS1) (Lactobacillus plantarum).